Here is a 511-residue protein sequence, read N- to C-terminus: Arginine-containing cyclodipeptide synthase eshA (511 aa).

The Conserved DDXXE motif signature appears at 413-417 (DDSAE).

The protein belongs to the arginine-containing cyclodipeptide synthase family.

The enzyme catalyses L-arginyl-tRNA(Arg) + L-leucyl-tRNA(Leu) = cyclo(L-arginyl-L-leucyl) + tRNA(Arg) + tRNA(Leu) + 2 H(+). The protein operates within secondary metabolite biosynthesis. Functionally, arginine-containing cyclodipeptide synthase; part of the cluster that mediates the biosynthesis of a highly modified cyclo-arginine-leucine dipeptide (cRW). Within the pathway, eshA acts as the scaffold-generating enzyme and is responsible for formation of the cyclo-Arg-Leu diketopiperazine (cRL) from L-arginyl-tRNA(Arg) + L-Leucyl-tRNA(Leu). Additional enzymes from the cluster then further modify the cyclo-Arg-Leu diketopiperazine (cRW) scaffold. The chain is Arginine-containing cyclodipeptide synthase eshA from Penicillium shearii (Eupenicillium shearii).